The following is a 302-amino-acid chain: Ribosome-binding factor PSRP1, chloroplastic (302 aa).

A chloroplast-targeting transit peptide spans 1-66 (MATLCTSAIN…SRNKPNVVCM (66 aa)).

As to quaternary structure, binds to the mRNA channel of the chloroplast small ribosomal subunit and interacts with 16S sRNA nucleotides at the A-site and P-site.

It localises to the plastid. Its subcellular location is the chloroplast stroma. Ribosome-binding factor involved in light- and temperature-dependent control of protein synthesis. Interacts with 16S sRNA nucleotides at the A-site and P-site, where it protects the decoding center and inhibits translation by preventing tRNA binding. Stabilizes 70S ribosomes against dissociation. May be recycled by the combined action of ribosome-recycling factor (RRF) and EF-G. This is Ribosome-binding factor PSRP1, chloroplastic (PSRP1) from Spinacia oleracea (Spinach).